The chain runs to 230 residues: Ribonuclease 3 (230 aa).

The 128-residue stretch at 8 to 135 (IVELKEKLGI…LIGAVYLQTN (128 aa)) folds into the RNase III domain. Glu48 contributes to the Mg(2+) binding site. Asp52 is an active-site residue. Positions 121 and 124 each coordinate Mg(2+). Residue Glu124 is part of the active site. One can recognise a DRBM domain in the interval 161–230 (DYKTMIQELV…AHFAFQKLSK (70 aa)).

Belongs to the ribonuclease III family. As to quaternary structure, homodimer. Mg(2+) serves as cofactor.

The protein localises to the cytoplasm. It catalyses the reaction Endonucleolytic cleavage to 5'-phosphomonoester.. Functionally, digests double-stranded RNA. Involved in the processing of primary rRNA transcript to yield the immediate precursors to the large and small rRNAs (23S and 16S). Processes some mRNAs, and tRNAs when they are encoded in the rRNA operon. Processes pre-crRNA and tracrRNA of type II CRISPR loci if present in the organism. The sequence is that of Ribonuclease 3 from Natranaerobius thermophilus (strain ATCC BAA-1301 / DSM 18059 / JW/NM-WN-LF).